Consider the following 270-residue polypeptide: Neurotrophic factor BDNF precursor form (270 aa).

A signal peptide spans 1 to 18 (MTILFVTMVISYFSCMRA). A propeptide spanning residues 19 to 151 (APMREIPGVQ…AANMSMRVRR (133 aa)) is cleaved from the precursor. N144 carries an N-linked (GlcNAc...) asparagine glycan. 3 disulfide bridges follow: C164-C231, C209-C260, and C219-C262.

Belongs to the NGF-beta family.

It localises to the secreted. Functionally, promotes the survival of neuronal populations that are all located either in the central nervous system or directly connected to it. The protein is Neurotrophic factor BDNF precursor form (bdnf) of Cyprinus carpio (Common carp).